A 325-amino-acid polypeptide reads, in one-letter code: Tetraacyldisaccharide 4'-kinase (325 aa).

Residue 55–62 (TAGGNGKT) participates in ATP binding.

It belongs to the LpxK family.

The catalysed reaction is a lipid A disaccharide + ATP = a lipid IVA + ADP + H(+). Its pathway is glycolipid biosynthesis; lipid IV(A) biosynthesis; lipid IV(A) from (3R)-3-hydroxytetradecanoyl-[acyl-carrier-protein] and UDP-N-acetyl-alpha-D-glucosamine: step 6/6. Transfers the gamma-phosphate of ATP to the 4'-position of a tetraacyldisaccharide 1-phosphate intermediate (termed DS-1-P) to form tetraacyldisaccharide 1,4'-bis-phosphate (lipid IVA). The sequence is that of Tetraacyldisaccharide 4'-kinase from Salmonella choleraesuis (strain SC-B67).